A 126-amino-acid chain; its full sequence is Probable 4-amino-4-deoxy-L-arabinose-phosphoundecaprenol flippase subunit ArnF (126 aa).

The Cytoplasmic segment spans residues 1-4 (MKGY). The chain crosses the membrane as a helical span at residues 5–25 (IWGLISVLLVTIAQLLLKWGV). Residues 26 to 49 (VNLPALNLGLHWFDIEWLWSHRHS) are Periplasmic-facing. A helical membrane pass occupies residues 50–70 (LVAVMAGLAGYLLSMLCWLFT). Over 71 to 79 (LKYLPLNKA) the chain is Cytoplasmic. A helical membrane pass occupies residues 80-100 (YPLISLSYVFVYLMVALLPWF). The Periplasmic segment spans residues 101–102 (NE). The chain crosses the membrane as a helical span at residues 103–123 (TITLLKTAGVIFILYGVWLIS). Residues 124 to 126 (RPE) lie on the Cytoplasmic side of the membrane.

This sequence belongs to the ArnF family. Heterodimer of ArnE and ArnF.

The protein resides in the cell inner membrane. The protein operates within bacterial outer membrane biogenesis; lipopolysaccharide biosynthesis. In terms of biological role, translocates 4-amino-4-deoxy-L-arabinose-phosphoundecaprenol (alpha-L-Ara4N-phosphoundecaprenol) from the cytoplasmic to the periplasmic side of the inner membrane. This chain is Probable 4-amino-4-deoxy-L-arabinose-phosphoundecaprenol flippase subunit ArnF, found in Photorhabdus laumondii subsp. laumondii (strain DSM 15139 / CIP 105565 / TT01) (Photorhabdus luminescens subsp. laumondii).